Here is a 243-residue protein sequence, read N- to C-terminus: MPNIRLDVEYDGTSFAGWQRQPNGIVTVQGEIEAVLSEILQEKINLAAAGRTDRGVHARGQVVNFSTRSPLEHSRIRHSLNCLLPSSICIPSSQLVPDDFHARFSALERQYRYFAIPEPSALMGRYTGCSHGDVDFALMQHLSSGLRGTHDFSLFSREDRDGNGSLCTVREAGWYRHKGVMVFHIAANRFLRSMVRGIVGGMLSAGRGELDPEEYLGMLGGGGGGMRVKPAVASGLFLWRVRY.

D53 functions as the Nucleophile in the catalytic mechanism. Substrate is bound at residue Y111.

It belongs to the tRNA pseudouridine synthase TruA family. In terms of assembly, homodimer.

It carries out the reaction uridine(38/39/40) in tRNA = pseudouridine(38/39/40) in tRNA. Functionally, formation of pseudouridine at positions 38, 39 and 40 in the anticodon stem and loop of transfer RNAs. The chain is tRNA pseudouridine synthase A from Chlorobium phaeovibrioides (strain DSM 265 / 1930) (Prosthecochloris vibrioformis (strain DSM 265)).